Consider the following 215-residue polypeptide: 3-isopropylmalate dehydratase small subunit (215 aa).

It belongs to the LeuD family. LeuD type 1 subfamily. Heterodimer of LeuC and LeuD.

The enzyme catalyses (2R,3S)-3-isopropylmalate = (2S)-2-isopropylmalate. It participates in amino-acid biosynthesis; L-leucine biosynthesis; L-leucine from 3-methyl-2-oxobutanoate: step 2/4. Its function is as follows. Catalyzes the isomerization between 2-isopropylmalate and 3-isopropylmalate, via the formation of 2-isopropylmaleate. This chain is 3-isopropylmalate dehydratase small subunit, found in Stutzerimonas stutzeri (strain A1501) (Pseudomonas stutzeri).